A 295-amino-acid chain; its full sequence is Ribosomal RNA small subunit methyltransferase A (295 aa).

Residues asparagine 29, leucine 31, glycine 56, glutamate 77, aspartate 102, and asparagine 128 each coordinate S-adenosyl-L-methionine.

The protein belongs to the class I-like SAM-binding methyltransferase superfamily. rRNA adenine N(6)-methyltransferase family. RsmA subfamily.

The protein resides in the cytoplasm. The enzyme catalyses adenosine(1518)/adenosine(1519) in 16S rRNA + 4 S-adenosyl-L-methionine = N(6)-dimethyladenosine(1518)/N(6)-dimethyladenosine(1519) in 16S rRNA + 4 S-adenosyl-L-homocysteine + 4 H(+). Its function is as follows. Specifically dimethylates two adjacent adenosines (A1518 and A1519) in the loop of a conserved hairpin near the 3'-end of 16S rRNA in the 30S particle. May play a critical role in biogenesis of 30S subunits. In Listeria monocytogenes serotype 4a (strain HCC23), this protein is Ribosomal RNA small subunit methyltransferase A.